Consider the following 133-residue polypeptide: Small ribosomal subunit protein uS8 (133 aa).

It belongs to the universal ribosomal protein uS8 family. As to quaternary structure, part of the 30S ribosomal subunit. Contacts proteins S5 and S12.

Its function is as follows. One of the primary rRNA binding proteins, it binds directly to 16S rRNA central domain where it helps coordinate assembly of the platform of the 30S subunit. This Prochlorococcus marinus (strain MIT 9312) protein is Small ribosomal subunit protein uS8.